The chain runs to 667 residues: Leucine-rich repeat-containing protein 43 (667 aa).

Positions Met1–Tyr11 are enriched in polar residues. The interval Met1–Thr24 is disordered. 4 LRR repeats span residues Lys148–Pro169, Thr170–Pro191, Arg194–Tyr213, and Gln221–Leu242. Residues Asn256 to Leu294 form the LRRCT domain. Disordered stretches follow at residues Phe374–Met407, Glu533–Pro570, and Ser616–Gln640. A compositionally biased stretch (acidic residues) spans Thr377 to Pro386. Basic residues predominate over residues Arg390–Phe399. The segment covering Lys540–Asp553 has biased composition (basic and acidic residues). Over residues Lys617 to Arg627 the composition is skewed to basic residues.

The sequence is that of Leucine-rich repeat-containing protein 43 (Lrrc43) from Mus musculus (Mouse).